Here is a 337-residue protein sequence, read N- to C-terminus: Mannitol dehydrogenase (337 aa).

Zn(2+)-binding residues include C27, H49, C80, C83, C86, C94, and C143.

It belongs to the zinc-containing alcohol dehydrogenase family. Requires Zn(2+) as cofactor.

It carries out the reaction D-mannitol + NAD(+) = D-mannose + NADH + H(+). Its function is as follows. Oxidizes mannitol to mannose. Provides the initial step by which translocated mannitol is committed to central metabolism and, by regulating mannitol pool size, is important in regulating salt tolerance at the cellular level. The polypeptide is Mannitol dehydrogenase (ELI3) (Petroselinum crispum (Parsley)).